The following is a 790-amino-acid chain: Phenylalanine--tRNA ligase beta subunit (790 aa).

The 116-residue stretch at 39-154 (PDSLNTVVTG…ENTPLGESAC (116 aa)) folds into the tRNA-binding domain. Residues 404-483 (SDPLSLNIRP…FVQKTQKILP (80 aa)) form the B5 domain. Mg(2+) contacts are provided by Asp-457, Asp-463, Glu-466, and Glu-467. The FDX-ACB domain occupies 694–790 (PIYPSSSRDI…NLANIGKGNS (97 aa)).

This sequence belongs to the phenylalanyl-tRNA synthetase beta subunit family. Type 1 subfamily. In terms of assembly, tetramer of two alpha and two beta subunits. Requires Mg(2+) as cofactor.

Its subcellular location is the cytoplasm. The enzyme catalyses tRNA(Phe) + L-phenylalanine + ATP = L-phenylalanyl-tRNA(Phe) + AMP + diphosphate + H(+). The polypeptide is Phenylalanine--tRNA ligase beta subunit (pheT) (Chlamydia muridarum (strain MoPn / Nigg)).